A 133-amino-acid chain; its full sequence is ATP synthase epsilon chain, chloroplastic (133 aa).

It belongs to the ATPase epsilon chain family. As to quaternary structure, F-type ATPases have 2 components, CF(1) - the catalytic core - and CF(0) - the membrane proton channel. CF(1) has five subunits: alpha(3), beta(3), gamma(1), delta(1), epsilon(1). CF(0) has three main subunits: a, b and c.

Its subcellular location is the plastid. It is found in the chloroplast thylakoid membrane. Its function is as follows. Produces ATP from ADP in the presence of a proton gradient across the membrane. The polypeptide is ATP synthase epsilon chain, chloroplastic (Daucus carota (Wild carrot)).